The following is an 865-amino-acid chain: Alanine--tRNA ligase (865 aa).

The Zn(2+) site is built by H556, H560, C660, and H664.

It belongs to the class-II aminoacyl-tRNA synthetase family. Zn(2+) is required as a cofactor.

It localises to the cytoplasm. The enzyme catalyses tRNA(Ala) + L-alanine + ATP = L-alanyl-tRNA(Ala) + AMP + diphosphate. In terms of biological role, catalyzes the attachment of alanine to tRNA(Ala) in a two-step reaction: alanine is first activated by ATP to form Ala-AMP and then transferred to the acceptor end of tRNA(Ala). Also edits incorrectly charged Ser-tRNA(Ala) and Gly-tRNA(Ala) via its editing domain. This chain is Alanine--tRNA ligase, found in Ruthia magnifica subsp. Calyptogena magnifica.